Consider the following 372-residue polypeptide: tRNA-specific 2-thiouridylase MnmA (372 aa).

ATP-binding positions include 9–16 (GLSGGVDS) and M35. Residues 95–97 (NPD) form an interaction with target base in tRNA region. The active-site Nucleophile is C100. C100 and C198 are joined by a disulfide. G124 is a binding site for ATP. The segment at 148-150 (KDQ) is interaction with tRNA. The active-site Cysteine persulfide intermediate is C198. An interaction with tRNA region spans residues 317–318 (RY).

It belongs to the MnmA/TRMU family.

The protein resides in the cytoplasm. It carries out the reaction S-sulfanyl-L-cysteinyl-[protein] + uridine(34) in tRNA + AH2 + ATP = 2-thiouridine(34) in tRNA + L-cysteinyl-[protein] + A + AMP + diphosphate + H(+). Catalyzes the 2-thiolation of uridine at the wobble position (U34) of tRNA, leading to the formation of s(2)U34. This Delftia acidovorans (strain DSM 14801 / SPH-1) protein is tRNA-specific 2-thiouridylase MnmA.